Reading from the N-terminus, the 148-residue chain is Short form salivary protein D7S1 (148 aa).

The first 21 residues, 1 to 21, serve as a signal peptide directing secretion; it reads MKQNVFFLIAYFSLVFCMCNA. 3 cysteine pairs are disulfide-bonded: C28/C61, C41/C147, and C103/C119.

Belongs to the PBP/GOBP family. As to expression, female salivary gland.

The protein resides in the secreted. In terms of biological role, in contrast to the related D7 salivary proteins that can bind biogenic amines, does not bind serotonin. This chain is Short form salivary protein D7S1, found in Aedes aegypti (Yellowfever mosquito).